The chain runs to 119 residues: Phosphoribosyl-AMP cyclohydrolase (119 aa).

D78 lines the Mg(2+) pocket. A Zn(2+)-binding site is contributed by C79. D80 and D82 together coordinate Mg(2+). Zn(2+) is bound by residues C95 and C102.

This sequence belongs to the PRA-CH family. Homodimer. Requires Mg(2+) as cofactor. Zn(2+) serves as cofactor.

It is found in the cytoplasm. It carries out the reaction 1-(5-phospho-beta-D-ribosyl)-5'-AMP + H2O = 1-(5-phospho-beta-D-ribosyl)-5-[(5-phospho-beta-D-ribosylamino)methylideneamino]imidazole-4-carboxamide. It functions in the pathway amino-acid biosynthesis; L-histidine biosynthesis; L-histidine from 5-phospho-alpha-D-ribose 1-diphosphate: step 3/9. Catalyzes the hydrolysis of the adenine ring of phosphoribosyl-AMP. This Jannaschia sp. (strain CCS1) protein is Phosphoribosyl-AMP cyclohydrolase.